The sequence spans 458 residues: UDP-N-acetylmuramate--L-alanine ligase (458 aa).

Position 112 to 118 (112 to 118 (GTHGKTT)) interacts with ATP.

The protein belongs to the MurCDEF family.

Its subcellular location is the cytoplasm. The enzyme catalyses UDP-N-acetyl-alpha-D-muramate + L-alanine + ATP = UDP-N-acetyl-alpha-D-muramoyl-L-alanine + ADP + phosphate + H(+). The protein operates within cell wall biogenesis; peptidoglycan biosynthesis. Cell wall formation. This is UDP-N-acetylmuramate--L-alanine ligase from Geotalea uraniireducens (strain Rf4) (Geobacter uraniireducens).